The sequence spans 208 residues: Small ribosomal subunit protein uS2 (208 aa).

It belongs to the universal ribosomal protein uS2 family.

The protein is Small ribosomal subunit protein uS2 of Cenarchaeum symbiosum (strain A).